The primary structure comprises 274 residues: Methylamine utilization protein MauF (274 aa).

7 helical membrane-spanning segments follow: residues 30 to 50 (WTRALILAASAAGGGAAALAM), 52 to 72 (AAHVALVLGLAAFAGGLLSTW), 105 to 125 (LGYALGALILGTLLGAIGGIA), 127 to 147 (LSGFATSFGLGLLAVIGLAYG), 176 to 196 (WVVGGLYGLSLGLDYLTYVQT), 202 to 222 (VTAAAVLSGNVAEAVALIAIF), and 253 to 273 (AAIADGAILTAVGAAFAMLAL).

The protein resides in the cell membrane. It participates in one-carbon metabolism; methylamine degradation. The chain is Methylamine utilization protein MauF (mauF) from Paracoccus versutus (Thiobacillus versutus).